The following is a 141-amino-acid chain: Large ribosomal subunit protein uL11 (141 aa).

It belongs to the universal ribosomal protein uL11 family. Part of the ribosomal stalk of the 50S ribosomal subunit. Interacts with L10 and the large rRNA to form the base of the stalk. L10 forms an elongated spine to which L12 dimers bind in a sequential fashion forming a multimeric L10(L12)X complex. One or more lysine residues are methylated.

Its function is as follows. Forms part of the ribosomal stalk which helps the ribosome interact with GTP-bound translation factors. This is Large ribosomal subunit protein uL11 from Streptococcus gordonii (strain Challis / ATCC 35105 / BCRC 15272 / CH1 / DL1 / V288).